Reading from the N-terminus, the 161-residue chain is Glycine-rich RNA-binding protein blt801 (161 aa).

One can recognise an RRM domain in the interval 6–84 (YRCFVGGLRW…RNITVNEAQS (79 aa)). Positions 72–161 (LDGRNITVNE…GGSGGGNWRE (90 aa)) are disordered. Serine 87 is modified (phosphoserine; by PKA). Gly residues predominate over residues 89–161 (GGGGFGGGGG…GGSGGGNWRE (73 aa)).

Binds single-stranded DNA and homoribopolymers of guanine, uracil and adenine, but not cytosine. Also binds RNA, with a preference for RNA containing a high proportion of adenine within an open loop structure. Possibly has a role in RNA transcription or processing during stress. The protein is Glycine-rich RNA-binding protein blt801 of Hordeum vulgare (Barley).